The primary structure comprises 104 residues: Replication restart protein PriB (104 aa).

An SSB domain is found at 1–101; that stretch reads MTNRLALSGT…LHAEQIELID (101 aa).

The protein belongs to the PriB family. In terms of assembly, homodimer. Interacts with PriA and DnaT. Component of the replication restart primosome. Primosome assembly occurs via a 'hand-off' mechanism. PriA binds to replication forks, subsequently PriB then DnaT bind; DnaT then displaces ssDNA to generate the helicase loading substrate.

In terms of biological role, involved in the restart of stalled replication forks, which reloads the replicative helicase on sites other than the origin of replication; the PriA-PriB pathway is the major replication restart pathway. During primosome assembly it facilitates complex formation between PriA and DnaT on DNA; stabilizes PriA on DNA. Stimulates the DNA unwinding activity of PriA helicase. The sequence is that of Replication restart protein PriB from Citrobacter koseri (strain ATCC BAA-895 / CDC 4225-83 / SGSC4696).